Consider the following 209-residue polypeptide: Inner membrane protein YjdF (209 aa).

At 1–7 (MTRTLKP) the chain is on the periplasmic side. A helical transmembrane segment spans residues 8–28 (LILNTSALTLTLILIYTGISA). The Cytoplasmic portion of the chain corresponds to 29–31 (HDK). A helical membrane pass occupies residues 32-52 (LTWLMEVTPVIIVVQLLLATA). Topologically, residues 53–55 (RRY) are periplasmic. The helical transmembrane segment at 56–76 (PLTPLLYTLIFLHAIILMVGG) threads the bilayer. The Cytoplasmic portion of the chain corresponds to 77 to 131 (QYTYAKVPVGFEVQEWLGLSRNPYDKLGHFFQGLVPALVAREILVRGMYVRGRKM). The helical transmembrane segment at 132-152 (VAFLVCCVALAISAMYELIEW) threads the bilayer. Topologically, residues 153 to 177 (WAALAMGQGADDFLGTQGDQWDTQS) are periplasmic. A helical membrane pass occupies residues 178–198 (DMFCALLGALTTVIFLARFHC). At 199-209 (RQLRRFGLITG) the chain is on the cytoplasmic side.

It localises to the cell inner membrane. The protein is Inner membrane protein YjdF (yjdF) of Escherichia coli (strain K12).